Consider the following 598-residue polypeptide: Elongation factor 4 (598 aa).

The 178-residue stretch at 4 to 181 (KKIRNFAIIA…AIVNLIPPPQ (178 aa)) folds into the tr-type G domain. Residues 16 to 21 (DHGKST) and 128 to 131 (NKID) contribute to the GTP site.

This sequence belongs to the TRAFAC class translation factor GTPase superfamily. Classic translation factor GTPase family. LepA subfamily.

The protein resides in the cell membrane. The catalysed reaction is GTP + H2O = GDP + phosphate + H(+). Its function is as follows. Required for accurate and efficient protein synthesis under certain stress conditions. May act as a fidelity factor of the translation reaction, by catalyzing a one-codon backward translocation of tRNAs on improperly translocated ribosomes. Back-translocation proceeds from a post-translocation (POST) complex to a pre-translocation (PRE) complex, thus giving elongation factor G a second chance to translocate the tRNAs correctly. Binds to ribosomes in a GTP-dependent manner. This chain is Elongation factor 4, found in Mesomycoplasma hyopneumoniae (strain 232) (Mycoplasma hyopneumoniae).